Reading from the N-terminus, the 375-residue chain is Ribosomal RNA large subunit methyltransferase G (375 aa).

This sequence belongs to the methyltransferase superfamily. RlmG family.

The protein localises to the cytoplasm. The enzyme catalyses guanosine(1835) in 23S rRNA + S-adenosyl-L-methionine = N(2)-methylguanosine(1835) in 23S rRNA + S-adenosyl-L-homocysteine + H(+). In terms of biological role, specifically methylates the guanine in position 1835 (m2G1835) of 23S rRNA. In Stutzerimonas stutzeri (strain A1501) (Pseudomonas stutzeri), this protein is Ribosomal RNA large subunit methyltransferase G.